The sequence spans 555 residues: MSLNTDDSGRIRTRQRAKRACETCKLRKRKCDGHEPCTYCLRYEYQCTFKPHPRRKPAASKSSARPSEEEDSPKFLDRVDANQEHMEANSGTAFPHLLGMRLNPQGAPKVYGFSWNLGPRDEPLEPFTNLTDLISREEMEDLASHYLKKIHPVYAVLDPDTLRQKIVARWHDPATAASYDPILCGVAALGSLYSGHQEHPKEGALVQSAKEMLETTRISKTTLLHHATAWILRTIYLRSTNCPHASWMASCSTMHIIEAIGAHQDPELVSLVYSDTADVSVNDESQRRLFWVATVLNSWISYEYGRSRVILRGVSCKPPLPRTGDFTTDLISMYQISERLDPDQNNKLSDLEDALSRVERLTLSHDALILSQSNLALTIYRRLRVASSNISNDILTRIIRLGNDGLEAAVRLAEDRSPWWHVANIPFQFLCILLAIDTRESLSYVGPALRSFRAITRHYSTPTLHTALETIESLVRLSQNKKERDLTLLRDSMQQEDPGLTEQGSTTSQAFNDASWLGATGDLTLPDNFDWDWNVFLDTQVPFFDEGEAGGQRYR.

A DNA-binding region (zn(2)-C6 fungal-type) is located at residues 21–47; the sequence is CETCKLRKRKCDGHEPCTYCLRYEYQC. The tract at residues 51–73 is disordered; the sequence is PHPRRKPAASKSSARPSEEEDSP.

The protein localises to the nucleus. Functionally, transcription factor that regulates the gene cluster that mediates the biosynthesis of 5-hydroxy-2-hydroxymethyl-1,4-pyrone, also know as kojic acid, a by-product in the fermentation process of malting rice that acts as a chelation agent. Negatively regulates the expression of the kojic acid-related protein kap1. Improves the antioxidant capacity via the accumulation of kojic acid that is also a strong oxidant. The chain is Transcription factor kojR from Aspergillus oryzae (strain ATCC 42149 / RIB 40) (Yellow koji mold).